Reading from the N-terminus, the 592-residue chain is MRVLCAFPEAMPSSNSRPPACLAPGALYLALLLHLSLSSQAGDRRPLPVDRAAGLKEKTLILLDVSTKNPVRTVNENFLSLQLDPSIIHDGWLDFLSSKRLVTLARGLSPAFLRFGGKRTDFLQFQNLRNPAKSRGGPGPDYYLKNYEDDIVRSDVALDKQKGCKIAQHPDVMLELQREKAAQMHLVLLKEQFSNTYSNLILTARSLDKLYNFADCSGLHLIFALNALRRNPNNSWNSSSALSLLKYSASKKYNISWELGNEPNNYRTMHGRAVNGSQLGKDYIQLKSLLQPIRIYSRASLYGPNIGRPRKNVIALLDGFMKVAGSTVDAVTWQHCYIDGRVVKVMDFLKTRLLDTLSDQIRKIQKVVNTYTPGKKIWLEGVVTTSAGGTNNLSDSYAAGFLWLNTLGMLANQGIDVVIRHSFFDHGYNHLVDQNFNPLPDYWLSLLYKRLIGPKVLAVHVAGLQRKPRPGRVIRDKLRIYAHCTNHHNHNYVRGSITLFIINLHRSRKKIKLAGTLRDKLVHQYLLQPYGQEGLKSKSVQLNGQPLVMVDDGTLPELKPRPLRAGRTLVIPPVTMGFYVVKNVNALACRYR.

Residues 1-41 (MRVLCAFPEAMPSSNSRPPACLAPGALYLALLLHLSLSSQA) form the signal peptide. Asn-254 and Asn-392 each carry an N-linked (GlcNAc...) asparagine glycan.

It belongs to the glycosyl hydrolase 79 family. In terms of assembly, interacts with HPSE. Interacts with SDC1 (via glycan chains). As to expression, widely expressed, with the highest expression in brain, mammary gland, prostate, small intestine, testis and uterus. In the central nervous system, expressed in the spinal cord, caudate nucleus, thalamus, substantia nigra, medulla oblongata, putamen and pons. In the urinary bladder, expressed in longitudinal and circular layers of detrusor muscle. Found both in normal and cancer tissues.

The protein resides in the secreted. It localises to the extracellular space. Its subcellular location is the extracellular matrix. Binds heparin and heparan sulfate with high affinity, but lacks heparanase activity. Inhibits HPSE, possibly by competing for its substrates (in vitro). This chain is Inactive heparanase-2 (HPSE2), found in Homo sapiens (Human).